We begin with the raw amino-acid sequence, 278 residues long: Glutamate racemase (278 aa).

Residues 13 to 14 (DS) and 45 to 46 (YG) each bind substrate. The Proton donor/acceptor role is filled by C76. 77–78 (NT) lines the substrate pocket. Catalysis depends on C185, which acts as the Proton donor/acceptor. 186–187 (TH) is a binding site for substrate.

It belongs to the aspartate/glutamate racemases family.

The catalysed reaction is L-glutamate = D-glutamate. It functions in the pathway cell wall biogenesis; peptidoglycan biosynthesis. In terms of biological role, provides the (R)-glutamate required for cell wall biosynthesis. This is Glutamate racemase from Gloeothece citriformis (strain PCC 7424) (Cyanothece sp. (strain PCC 7424)).